The primary structure comprises 226 residues: Enolase-phosphatase E1 (226 aa).

This sequence belongs to the HAD-like hydrolase superfamily. MasA/MtnC family. Monomer. Mg(2+) serves as cofactor.

The enzyme catalyses 5-methylsulfanyl-2,3-dioxopentyl phosphate + H2O = 1,2-dihydroxy-5-(methylsulfanyl)pent-1-en-3-one + phosphate. Its pathway is amino-acid biosynthesis; L-methionine biosynthesis via salvage pathway; L-methionine from S-methyl-5-thio-alpha-D-ribose 1-phosphate: step 3/6. The protein operates within amino-acid biosynthesis; L-methionine biosynthesis via salvage pathway; L-methionine from S-methyl-5-thio-alpha-D-ribose 1-phosphate: step 4/6. Its function is as follows. Bifunctional enzyme that catalyzes the enolization of 2,3-diketo-5-methylthiopentyl-1-phosphate (DK-MTP-1-P) into the intermediate 2-hydroxy-3-keto-5-methylthiopentenyl-1-phosphate (HK-MTPenyl-1-P), which is then dephosphorylated to form the acireductone 1,2-dihydroxy-3-keto-5-methylthiopentene (DHK-MTPene). This Shewanella amazonensis (strain ATCC BAA-1098 / SB2B) protein is Enolase-phosphatase E1.